Consider the following 41-residue polypeptide: Pi-stichotoxin-Hmg5c (41 aa).

Intrachain disulfides connect Cys-4–Cys-37, Cys-6–Cys-30, and Cys-20–Cys-38.

This sequence belongs to the sea anemone type 3 (BDS) potassium channel toxin family.

The protein localises to the secreted. The protein resides in the nematocyst. Its function is as follows. Toxin with different activities on acid-sensing ion channels (ASIC) and nicotinic acetylcholine receptors. Is able to bind T.californica muscle-type nicotinic acetylcholine receptors (nAChR) (alpha-1-beta-1-delta-epsilon (CHRNA1-CHRNB1-CHRND-CHRNE)), and human alpha-7/CHRNA7 nicotinic acetylcholine receptors. Weakly and reversibly inhibits rat homomeric ASIC1 (isoform ASIC1a) (IC(50)=1.25 uM), while it potentiates rat homomeric ASIC3 (EC(50)=1.53 uM). Rat ASIC1a current inhibition is not complete, and reaches a maximum of 86% inhibition. On rat ASIC3, does not activate the channel itself, but produces a remarkable potentiation of the transient current resulting from the acidic pulse. At the maximal applied concentration, elicits responses that are twice as high as those produced by extracellular protons. Surprisingly, shows a different activity on human ASIC3. On the truncated human ASIC3 (ASIC3-D20), the toxin weakly inhibits the channel. Molecular modeling interaction with rat ASIC1a suggests that it hinders the collapse of acidic pockets and stabilizes nonconducting channels state. In vivo, causes an anxiolytic effect on mouse behavior. Also shows an analgesic activity in an acid-induced muscle pain model, and important anti-inflammatory effect in models of acute local inflammation. This Heteractis magnifica (Magnificent sea anemone) protein is Pi-stichotoxin-Hmg5c.